The sequence spans 353 residues: 2-Hydroxyacid oxidase 2 (353 aa).

The FMN hydroxy acid dehydrogenase domain maps to 2-353 (PLVCLTDFRE…NQDLIQFSRL (352 aa)). FMN contacts are provided by residues 77–79 (PTG), S106, and Q128. Y130 is an a 2-oxocarboxylate binding site. Residue T156 coordinates FMN. R165 contributes to the a 2-oxocarboxylate binding site. K224 serves as a coordination point for FMN. H248 serves as the catalytic Proton acceptor. An a 2-oxocarboxylate-binding site is contributed by R251. FMN is bound by residues 279-283 (DGGIR) and 302-303 (GR). Positions 351–353 (SRL) match the Microbody targeting signal motif.

This sequence belongs to the FMN-dependent alpha-hydroxy acid dehydrogenase family. Homotetramer. Requires FMN as cofactor.

It localises to the peroxisome. It catalyses the reaction a (2S)-2-hydroxycarboxylate + O2 = a 2-oxocarboxylate + H2O2. It carries out the reaction 2-hydroxyhexadecanoate + O2 = 2-oxohexadecanoate + H2O2. The enzyme catalyses 2-hydroxyoctanoate + O2 = 2-oxooctanoate + H2O2. Its pathway is lipid metabolism; fatty acid metabolism. Its function is as follows. Oxidase that catalyzes the oxidation of medium and long chain hydroxyacids such as 2-hydroxyhexadecanoate and 2-hydroxyoctanoate, to the correspondong 2-oxoacids. Its role in the oxidation of 2-hydroxy fatty acids may contribute to the general pathway of fatty acid alpha-oxidation. Active in vitro with the artificial electron acceptor 2,6-dichlorophenolindophenol (DCIP), but O2 is believed to be the physiological electron acceptor, leading to the production of H2O2. This Bos taurus (Bovine) protein is 2-Hydroxyacid oxidase 2 (HAO2).